The following is a 492-amino-acid chain: 2-succinylbenzoate--CoA ligase (492 aa).

It belongs to the ATP-dependent AMP-binding enzyme family. MenE subfamily.

It carries out the reaction 2-succinylbenzoate + ATP + CoA = 2-succinylbenzoyl-CoA + AMP + diphosphate. It functions in the pathway quinol/quinone metabolism; 1,4-dihydroxy-2-naphthoate biosynthesis; 1,4-dihydroxy-2-naphthoate from chorismate: step 5/7. It participates in quinol/quinone metabolism; menaquinone biosynthesis. In terms of biological role, converts 2-succinylbenzoate (OSB) to 2-succinylbenzoyl-CoA (OSB-CoA). The sequence is that of 2-succinylbenzoate--CoA ligase from Staphylococcus aureus (strain USA300 / TCH1516).